An 81-amino-acid polypeptide reads, in one-letter code: Insulin-like growth factor 1 (81 aa).

Residues Phe-1–Ala-4 constitute a propeptide that is removed on maturation. A b region spans residues Gly-5–Thr-33. Intrachain disulfides connect Cys-10/Cys-52, Cys-22/Cys-65, and Cys-51/Cys-56. The interval Gly-34 to Thr-45 is c. An a region spans residues Gly-46–Ala-66. Residues Pro-67–Ala-74 form a d region. Residues Arg-75–Arg-81 constitute a propeptide, e peptide.

It belongs to the insulin family. In terms of assembly, forms a ternary complex with IGFR1 and ITGAV:ITGB3. Forms a ternary complex with IGFR1 and ITGA6:ITGB4.

It localises to the secreted. Its function is as follows. The insulin-like growth factors, isolated from plasma, are structurally and functionally related to insulin but have a much higher growth-promoting activity. May be a physiological regulator of [1-14C]-2-deoxy-D-glucose (2DG) transport and glycogen synthesis in osteoblasts. Stimulates glucose transport in bone-derived osteoblastic (PyMS) cells and is effective at much lower concentrations than insulin, not only regarding glycogen and DNA synthesis but also with regard to enhancing glucose uptake. May play a role in synapse maturation. Ca(2+)-dependent exocytosis of IGF1 is required for sensory perception of smell in the olfactory bulb. Acts as a ligand for IGF1R. Binds to the alpha subunit of IGF1R, leading to the activation of the intrinsic tyrosine kinase activity which autophosphorylates tyrosine residues in the beta subunit thus initiating a cascade of down-stream signaling events leading to activation of the PI3K-AKT/PKB and the Ras-MAPK pathways. Binds to integrins ITGAV:ITGB3 and ITGA6:ITGB4. Its binding to integrins and subsequent ternary complex formation with integrins and IGFR1 are essential for IGF1 signaling. Induces the phosphorylation and activation of IGFR1, MAPK3/ERK1, MAPK1/ERK2 and AKT1. As part of the MAPK/ERK signaling pathway, acts as a negative regulator of apoptosis in cardiomyocytes via promotion of STUB1/CHIP-mediated ubiquitination and degradation of ICER-type isoforms of CREM. The chain is Insulin-like growth factor 1 from Suncus murinus (Asian house shrew).